We begin with the raw amino-acid sequence, 515 residues long: MSDKVIIFDTTLRDGEQSPGASMTKDEKVRIARQLERLKVDVIEAGFAASSEGDFQAISAVAAAVKDSIVCSLARANDKDITRAADALQAANAKRIHAFLATSPLHMAVKLRMSPEEVLEQAKRSIRFARNLASDIEFSAEDGYRSEMDFLCRVVEAVINEGASTINIPDTVGYATPELYGDFIKTLRTRVPNSDKAVWSVHCHNDLGMAVANSLAGVKIGGARQIECTINGLGERAGNTALEEIVMALRTRKDYFDMVCGIDASQIVPASKLVSQITGFVVQPNKAVVGANAFAHTSGIHQDGILKNRDTYEIMRAEDVGWSANKIVLGKLSGRNAFKQRLQELGITVEAEADLNEAFTRFKALADQKSEIFDEDIIAIMSDSAAAEEGEHYHFISLSQHSETGERPKSRVIFRMGDKEVSSEAEGNGPVDASLNAIEEIAKSGAEQLLYSVNAITSGTQSQGEVTVRLSKGGRIVNGVGTDPDIIAASAKAYLSALNKLHDPSQAKLNAQMAP.

Residues 5-268 (VIIFDTTLRD…VCGIDASQIV (264 aa)) enclose the Pyruvate carboxyltransferase domain. 4 residues coordinate Mn(2+): D14, H202, H204, and N239. A regulatory domain region spans residues 394–515 (HFISLSQHSE…QAKLNAQMAP (122 aa)).

This sequence belongs to the alpha-IPM synthase/homocitrate synthase family. LeuA type 1 subfamily. In terms of assembly, homodimer. Mn(2+) serves as cofactor.

It localises to the cytoplasm. It carries out the reaction 3-methyl-2-oxobutanoate + acetyl-CoA + H2O = (2S)-2-isopropylmalate + CoA + H(+). It participates in amino-acid biosynthesis; L-leucine biosynthesis; L-leucine from 3-methyl-2-oxobutanoate: step 1/4. Functionally, catalyzes the condensation of the acetyl group of acetyl-CoA with 3-methyl-2-oxobutanoate (2-ketoisovalerate) to form 3-carboxy-3-hydroxy-4-methylpentanoate (2-isopropylmalate). The protein is 2-isopropylmalate synthase of Polynucleobacter asymbioticus (strain DSM 18221 / CIP 109841 / QLW-P1DMWA-1) (Polynucleobacter necessarius subsp. asymbioticus).